The sequence spans 424 residues: ATP-sensitive inward rectifier potassium channel 8 (424 aa).

Over 1–69 (MLARKSIIPE…IFTTLVDLKW (69 aa)) the chain is Cytoplasmic. At serine 6 the chain carries Phosphoserine. Residues 70 to 94 (RHTLVIFTMSFLCSWLLFAIMWWLV) traverse the membrane as a helical segment. Over 95 to 126 (AFAHGDIYAYMEKGTMEKSGLESAVCVTNVRS) the chain is Extracellular. Positions 127 to 138 (FTSAFLFSIEVQ) form an intramembrane region, helical; Pore-forming. An intramembrane region (pore-forming) is located at residues 139 to 145 (VTIGFGG). A Selectivity filter motif is present at residues 140-145 (TIGFGG). Residues 146–154 (RMMTEECPL) are Extracellular-facing. The chain crosses the membrane as a helical span at residues 155-176 (AITVLILQNIVGLIINAVMLGC). Residues 177–424 (IFMKTAQAHR…PEGNQCPSES (248 aa)) are Cytoplasmic-facing. A disordered region spans residues 373 to 409 (ELSHQNSLRKRNSMRRNNSMRRNNSIRRNNSSLMVPK). Positions 387-404 (RRNNSMRRNNSIRRNNSS) are enriched in low complexity.

Belongs to the inward rectifier-type potassium channel (TC 1.A.2.1) family. KCNJ8 subfamily. As to quaternary structure, interacts with ABCC9.

The protein resides in the membrane. The enzyme catalyses K(+)(in) = K(+)(out). Its function is as follows. Inward rectifier potassium channels are characterized by a greater tendency to allow potassium to flow into the cell rather than out of it. Their voltage dependence is regulated by the concentration of extracellular potassium; as external potassium is raised, the voltage range of the channel opening shifts to more positive voltages. The inward rectification is mainly due to the blockage of outward current by internal magnesium. This channel is activated by internal ATP and can be blocked by external barium. Can form a sulfonylurea-sensitive but ATP-insensitive potassium channel with ABCC9. This is ATP-sensitive inward rectifier potassium channel 8 (Kcnj8) from Mus musculus (Mouse).